Reading from the N-terminus, the 788-residue chain is DNA replication helicase (788 aa).

73–80 (GTAGAGKS) is a binding site for ATP.

The protein belongs to the herpesviridae helicase family. In terms of assembly, associates with the primase and the primase-associated factor to form the helicase-primase complex.

It is found in the host nucleus. Its function is as follows. Component of the helicase/primase complex. Unwinds the DNA at the replication forks and generates single-stranded DNA for both leading and lagging strand synthesis. The primase synthesizes short RNA primers on the lagging strand that the polymerase elongates using dNTPs. Possesses helicase-like motifs and therefore may act as the helicase subunit of the complex. The chain is DNA replication helicase from Homo sapiens (Human).